Reading from the N-terminus, the 232-residue chain is Large ribosomal subunit protein uL1 (232 aa).

The protein belongs to the universal ribosomal protein uL1 family. Part of the 50S ribosomal subunit.

In terms of biological role, binds directly to 23S rRNA. The L1 stalk is quite mobile in the ribosome, and is involved in E site tRNA release. Functionally, protein L1 is also a translational repressor protein, it controls the translation of the L11 operon by binding to its mRNA. The protein is Large ribosomal subunit protein uL1 of Methylorubrum populi (strain ATCC BAA-705 / NCIMB 13946 / BJ001) (Methylobacterium populi).